We begin with the raw amino-acid sequence, 135 residues long: ATP synthase epsilon chain (135 aa).

Belongs to the ATPase epsilon chain family. As to quaternary structure, F-type ATPases have 2 components, CF(1) - the catalytic core - and CF(0) - the membrane proton channel. CF(1) has five subunits: alpha(3), beta(3), gamma(1), delta(1), epsilon(1). CF(0) has three main subunits: a, b and c.

Its subcellular location is the cell inner membrane. Functionally, produces ATP from ADP in the presence of a proton gradient across the membrane. This is ATP synthase epsilon chain from Allorhizobium ampelinum (strain ATCC BAA-846 / DSM 112012 / S4) (Agrobacterium vitis (strain S4)).